A 239-amino-acid chain; its full sequence is Homeobox protein Nkx-2.8 (239 aa).

Positions 1–11 are enriched in polar residues; it reads MATSGRLSFTV. A disordered region spans residues 1-87; it reads MATSGRLSFT…GSDAEKRKKR (87 aa). Basic and acidic residues predominate over residues 21–32; the sequence is DAQHLPRREPEP. Residues 62-79 show a composition bias toward low complexity; that stretch reads SPPDSSQRPSARPASPGS. The homeobox DNA-binding region spans 84-143; that stretch reads RKKRRVLFSKAQTLELERRFRQQRYLSAPEREQLASLLRLTPTQVKIWFQNHRYKLKRAR.

Belongs to the NK-2 homeobox family.

The protein resides in the nucleus. This is Homeobox protein Nkx-2.8 (NKX2-8) from Homo sapiens (Human).